The following is a 203-amino-acid chain: MKKMAIACALLSSVVASSVWADAASSLKSRLDKVSSFHATFTQKVTDGSGAAVQEGQGDLWVKRPNLFNWHMTQPDESILVSDGKTLWFYNPFVEQATATWLKDATGNTPFMLIARNQASDWQQYNIKQDGDNFVLTPKASNGNLKQFTINVGRDGTIHQFSAVEQDDQRSAYQLKSQQNGAVEPSKFTFTPPQGVTIDDQRK.

The signal sequence occupies residues 1–21 (MKKMAIACALLSSVVASSVWA). The interval 178–203 (QQNGAVEPSKFTFTPPQGVTIDDQRK) is disordered.

It belongs to the LolA family. Monomer.

The protein localises to the periplasm. Its function is as follows. Participates in the translocation of lipoproteins from the inner membrane to the outer membrane. Only forms a complex with a lipoprotein if the residue after the N-terminal Cys is not an aspartate (The Asp acts as a targeting signal to indicate that the lipoprotein should stay in the inner membrane). The sequence is that of Outer-membrane lipoprotein carrier protein from Salmonella typhi.